Here is a 204-residue protein sequence, read N- to C-terminus: Ribosomal RNA small subunit methyltransferase G (204 aa).

Residues G76, L81, 127-128, and R140 each bind S-adenosyl-L-methionine; that span reads IE.

This sequence belongs to the methyltransferase superfamily. RNA methyltransferase RsmG family.

The protein resides in the cytoplasm. It carries out the reaction guanosine(527) in 16S rRNA + S-adenosyl-L-methionine = N(7)-methylguanosine(527) in 16S rRNA + S-adenosyl-L-homocysteine. In terms of biological role, specifically methylates the N7 position of guanine in position 527 of 16S rRNA. This is Ribosomal RNA small subunit methyltransferase G from Francisella philomiragia subsp. philomiragia (strain ATCC 25017 / CCUG 19701 / FSC 153 / O#319-036).